The following is a 497-amino-acid chain: Subtilisin-like protease CPC735_031240 (497 aa).

The first 16 residues, 1–16 (MKGVLSLSLLPLLAAP), serve as a signal peptide directing secretion. A propeptide spanning residues 17-136 (SPILVDTIHR…IEKDSEVHAW (120 aa)) is cleaved from the precursor. The region spanning 43 to 134 (SYIVVFKKNV…QYIEKDSEVH (92 aa)) is the Inhibitor I9 domain. A Peptidase S8 domain is found at 146-452 (PWGLARVSHR…GGSSNYTAII (307 aa)). Residues Asp182 and His214 each act as charge relay system in the active site. Asn244 and Asn284 each carry an N-linked (GlcNAc...) asparagine glycan. Catalysis depends on Ser380, which acts as the Charge relay system. A glycan (N-linked (GlcNAc...) asparagine) is linked at Asn447.

The protein belongs to the peptidase S8 family.

It is found in the secreted. In terms of biological role, secreted subtilisin-like serine protease with keratinolytic activity that contributes to pathogenicity. The protein is Subtilisin-like protease CPC735_031240 of Coccidioides posadasii (strain C735) (Valley fever fungus).